The chain runs to 66 residues: Probable cytochrome b-c1 complex subunit 9 (66 aa).

Residues 1–20 (MSNALTNIFYKYVARRNSTW) lie on the Mitochondrial matrix side of the membrane. Residues 21 to 46 (MAGAILGAFVLDSTVSGAVNTFFDSV) form a helical membrane-spanning segment. At 47 to 66 (NKGKLWKDVYAERVKKGISQ) the chain is on the mitochondrial intermembrane side.

Belongs to the UQCR10/QCR9 family. In terms of assembly, component of the ubiquinol-cytochrome c oxidoreductase (cytochrome b-c1 complex, complex III, CIII), a multisubunit enzyme composed of 3 respiratory subunits cytochrome b, cytochrome c1 and Rieske protein, 2 core protein subunits, and additional low-molecular weight protein subunits. The complex exists as an obligatory dimer and forms supercomplexes (SCs) in the inner mitochondrial membrane with cytochrome c oxidase (complex IV, CIV).

The protein resides in the mitochondrion inner membrane. Its function is as follows. Component of the ubiquinol-cytochrome c oxidoreductase, a multisubunit transmembrane complex that is part of the mitochondrial electron transport chain which drives oxidative phosphorylation. The respiratory chain contains 3 multisubunit complexes succinate dehydrogenase (complex II, CII), ubiquinol-cytochrome c oxidoreductase (cytochrome b-c1 complex, complex III, CIII) and cytochrome c oxidase (complex IV, CIV), that cooperate to transfer electrons derived from NADH and succinate to molecular oxygen, creating an electrochemical gradient over the inner membrane that drives transmembrane transport and the ATP synthase. The cytochrome b-c1 complex catalyzes electron transfer from ubiquinol to cytochrome c, linking this redox reaction to translocation of protons across the mitochondrial inner membrane, with protons being carried across the membrane as hydrogens on the quinol. In the process called Q cycle, 2 protons are consumed from the matrix, 4 protons are released into the intermembrane space and 2 electrons are passed to cytochrome c. In Dictyostelium discoideum (Social amoeba), this protein is Probable cytochrome b-c1 complex subunit 9.